The following is a 104-amino-acid chain: MSARMFVLCCIWFIVAFLWITITSALDKEWMIDGRGINNVCDVLMYLEEDDTRDVGVIMTLPLFFPFLWFALWRKKRGWFMYATALAIFGYWLWQFFLRYQFCL.

Over 1-5 the chain is Cytoplasmic; it reads MSARM. A helical membrane pass occupies residues 6–26; the sequence is FVLCCIWFIVAFLWITITSAL. Residues 27-52 are Periplasmic-facing; it reads DKEWMIDGRGINNVCDVLMYLEEDDT. A helical transmembrane segment spans residues 53–73; the sequence is RDVGVIMTLPLFFPFLWFALW. The Cytoplasmic segment spans residues 74-77; the sequence is RKKR. Residues 78 to 98 traverse the membrane as a helical segment; sequence GWFMYATALAIFGYWLWQFFL. At 99-104 the chain is on the periplasmic side; sequence RYQFCL.

The protein localises to the cell inner membrane. In Escherichia coli (strain K12), this protein is Inner membrane protein YjeO (yjeO).